A 297-amino-acid chain; its full sequence is Protoheme IX farnesyltransferase (297 aa).

The next 9 helical transmembrane spans lie at 12–32, 36–56, 85–105, 108–128, 133–153, 163–183, 209–229, 230–250, and 266–286; these read PGII…AAKG, YALF…GCVF, VSLV…YLAA, LAMW…SLYM, VYGT…GYCA, LILL…IAIF, ITLY…SGYA, GYKY…MALQ, and FIFS…DFMV.

Belongs to the UbiA prenyltransferase family. Protoheme IX farnesyltransferase subfamily.

Its subcellular location is the cell inner membrane. It catalyses the reaction heme b + (2E,6E)-farnesyl diphosphate + H2O = Fe(II)-heme o + diphosphate. The protein operates within porphyrin-containing compound metabolism; heme O biosynthesis; heme O from protoheme: step 1/1. In terms of biological role, converts heme B (protoheme IX) to heme O by substitution of the vinyl group on carbon 2 of heme B porphyrin ring with a hydroxyethyl farnesyl side group. This chain is Protoheme IX farnesyltransferase, found in Sodalis glossinidius (strain morsitans).